The sequence spans 118 residues: uncharacterized protein (118 aa).

The protein localises to the mitochondrion. This is an uncharacterized protein from Arabidopsis thaliana (Mouse-ear cress).